Consider the following 515-residue polypeptide: E3 ubiquitin-protein ligase RNF217 (515 aa).

Disordered stretches follow at residues 1–125 (MGEE…VLAQ) and 147–189 (PEAP…ADPL). The span at 10–22 (GSGGARASGGGSA) shows a compositional bias: gly residues. Composition is skewed to low complexity over residues 39–49 (GPRAAASSSRP) and 147–157 (PEAPSAESPSP). Positions 158-178 (SESPPQAPLGPIPASPPPSFP) are enriched in pro residues. A compositionally biased stretch (low complexity) spans 179 to 189 (SSPLSLPADPL). The segment at 232 to 451 (MVLMCRVCLE…LSIFGCKYRY (220 aa)) is TRIAD supradomain. C236, C239, C256, C259, C356, C359, H364, C369, C396, and C399 together coordinate Zn(2+). The RING-type 1 zinc finger occupies 236-282 (CRVCLEDKPIKPLPCCKKAVCEECLKIYLSSQVQLGQVEIKCPVTEC). The segment at 301-369 (IKYKYFLELG…HSPWHEGVNC (69 aa)) adopts an IBR-type zinc-finger fold. The RING-type 2; atypical zinc-finger motif lies at 396–425 (CPKCKIHIQRTEGCDHMTCSQCNTNFCYRC). Residue C409 is part of the active site. Zn(2+) contacts are provided by C414, C417, C422, C425, H438, and C447. A helical transmembrane segment spans residues 476 to 496 (LILVLGLALGAIAVVIGLFVF).

Belongs to the RBR family. RNF217 subfamily. Interacts with HAX1.

Its subcellular location is the membrane. It is found in the cytoplasm. It catalyses the reaction [E2 ubiquitin-conjugating enzyme]-S-ubiquitinyl-L-cysteine + [acceptor protein]-L-lysine = [E2 ubiquitin-conjugating enzyme]-L-cysteine + [acceptor protein]-N(6)-ubiquitinyl-L-lysine.. It participates in protein modification; protein ubiquitination. Functionally, E3 ubiquitin-protein ligase which accepts ubiquitin from E2 ubiquitin-conjugating enzymes in the form of a thioester and then directly transfers the ubiquitin to targeted substrates. Mediates the degradation of the iron exporter ferroportin/SLC40A1 and thus regulates iron homeostasis. This Mus musculus (Mouse) protein is E3 ubiquitin-protein ligase RNF217 (Rnf217).